The chain runs to 359 residues: 2-epi-5-epi-valiolone 7-kinase (359 aa).

The interval 28–48 (GGLGEVHTTPSPGHARRPGAG) is disordered.

It belongs to the ROK (NagC/XylR) family.

The catalysed reaction is 2-epi-5-epi-valiolone + ATP = 2-epi-5-epi-valiolone 7-phosphate + ADP + H(+). In terms of biological role, catalyzes the conversion of 2-epi-5-epi-valiolone to 2-epi-5-epi-valiolone 7-phosphate. Involved in the biosynthesis of the acarviose moiety of the alpha-glucosidase inhibitor acarbose. The chain is 2-epi-5-epi-valiolone 7-kinase from Actinoplanes sp. (strain ATCC 31044 / CBS 674.73 / SE50/110).